The following is a 358-amino-acid chain: Methylthioribose-1-phosphate isomerase (358 aa).

Residues 54 to 56, Arg-96, and Gln-205 each bind substrate; that span reads RGA. The active-site Proton donor is Asp-246. Substrate is bound at residue 256 to 257; it reads NK.

Belongs to the eIF-2B alpha/beta/delta subunits family. MtnA subfamily.

The enzyme catalyses 5-(methylsulfanyl)-alpha-D-ribose 1-phosphate = 5-(methylsulfanyl)-D-ribulose 1-phosphate. Its pathway is amino-acid biosynthesis; L-methionine biosynthesis via salvage pathway; L-methionine from S-methyl-5-thio-alpha-D-ribose 1-phosphate: step 1/6. In terms of biological role, catalyzes the interconversion of methylthioribose-1-phosphate (MTR-1-P) into methylthioribulose-1-phosphate (MTRu-1-P). This is Methylthioribose-1-phosphate isomerase from Stutzerimonas stutzeri (strain A1501) (Pseudomonas stutzeri).